Reading from the N-terminus, the 912-residue chain is Protein translocase subunit SecA (912 aa).

ATP-binding positions include glutamine 87, 105–109 (GEGKT), and aspartate 508. The tract at residues 865 to 912 (DEEAAQVQSGNAPLPVSQVTRDEPKVGRNDPCPCGSGKKYKHCHGQLS) is disordered. The Zn(2+) site is built by cysteine 896, cysteine 898, cysteine 907, and histidine 908. The span at 902–912 (KKYKHCHGQLS) shows a compositional bias: basic residues.

This sequence belongs to the SecA family. As to quaternary structure, monomer and homodimer. Part of the essential Sec protein translocation apparatus which comprises SecA, SecYEG and auxiliary proteins SecDF-YajC and YidC. Requires Zn(2+) as cofactor.

It localises to the cell inner membrane. The protein localises to the cytoplasm. The catalysed reaction is ATP + H2O + cellular proteinSide 1 = ADP + phosphate + cellular proteinSide 2.. Its function is as follows. Part of the Sec protein translocase complex. Interacts with the SecYEG preprotein conducting channel. Has a central role in coupling the hydrolysis of ATP to the transfer of proteins into and across the cell membrane, serving both as a receptor for the preprotein-SecB complex and as an ATP-driven molecular motor driving the stepwise translocation of polypeptide chains across the membrane. The protein is Protein translocase subunit SecA of Xanthomonas oryzae pv. oryzae (strain PXO99A).